We begin with the raw amino-acid sequence, 123 residues long: Ribosome-binding factor A (123 aa).

This sequence belongs to the RbfA family. In terms of assembly, monomer. Binds 30S ribosomal subunits, but not 50S ribosomal subunits or 70S ribosomes.

It is found in the cytoplasm. Functionally, one of several proteins that assist in the late maturation steps of the functional core of the 30S ribosomal subunit. Associates with free 30S ribosomal subunits (but not with 30S subunits that are part of 70S ribosomes or polysomes). Required for efficient processing of 16S rRNA. May interact with the 5'-terminal helix region of 16S rRNA. The chain is Ribosome-binding factor A from Trichlorobacter lovleyi (strain ATCC BAA-1151 / DSM 17278 / SZ) (Geobacter lovleyi).